Here is a 301-residue protein sequence, read N- to C-terminus: Probable aspartoacylase (301 aa).

2 residues coordinate Zn(2+): H13 and E16. Substrate-binding positions include R54 and 61–62; that span reads NR. H105 contacts Zn(2+). Positions 163 and 273 each coordinate substrate.

The protein belongs to the AspA/AstE family. Aspartoacylase subfamily. Zn(2+) serves as cofactor.

The enzyme catalyses an N-acyl-L-aspartate + H2O = a carboxylate + L-aspartate. This is Probable aspartoacylase from Prochlorococcus marinus (strain MIT 9215).